The primary structure comprises 140 residues: Large ribosomal subunit protein uL14 (140 aa).

Belongs to the universal ribosomal protein uL14 family.

The sequence is that of Large ribosomal subunit protein uL14 (RpL23) from Drosophila melanogaster (Fruit fly).